The chain runs to 258 residues: Imidazole glycerol phosphate synthase subunit HisF (258 aa).

Catalysis depends on residues Asp11 and Asp130.

Belongs to the HisA/HisF family. In terms of assembly, heterodimer of HisH and HisF.

The protein localises to the cytoplasm. The catalysed reaction is 5-[(5-phospho-1-deoxy-D-ribulos-1-ylimino)methylamino]-1-(5-phospho-beta-D-ribosyl)imidazole-4-carboxamide + L-glutamine = D-erythro-1-(imidazol-4-yl)glycerol 3-phosphate + 5-amino-1-(5-phospho-beta-D-ribosyl)imidazole-4-carboxamide + L-glutamate + H(+). It participates in amino-acid biosynthesis; L-histidine biosynthesis; L-histidine from 5-phospho-alpha-D-ribose 1-diphosphate: step 5/9. In terms of biological role, IGPS catalyzes the conversion of PRFAR and glutamine to IGP, AICAR and glutamate. The HisF subunit catalyzes the cyclization activity that produces IGP and AICAR from PRFAR using the ammonia provided by the HisH subunit. In Nitrobacter winogradskyi (strain ATCC 25391 / DSM 10237 / CIP 104748 / NCIMB 11846 / Nb-255), this protein is Imidazole glycerol phosphate synthase subunit HisF.